Consider the following 333-residue polypeptide: Ribosomal RNA small subunit methyltransferase C (333 aa).

It belongs to the methyltransferase superfamily. RsmC family. In terms of assembly, monomer.

Its subcellular location is the cytoplasm. It carries out the reaction guanosine(1207) in 16S rRNA + S-adenosyl-L-methionine = N(2)-methylguanosine(1207) in 16S rRNA + S-adenosyl-L-homocysteine + H(+). In terms of biological role, specifically methylates the guanine in position 1207 of 16S rRNA in the 30S particle. The protein is Ribosomal RNA small subunit methyltransferase C of Mannheimia succiniciproducens (strain KCTC 0769BP / MBEL55E).